A 221-amino-acid chain; its full sequence is Endonuclease V (221 aa).

Residues D38 and D104 each coordinate Mg(2+).

This sequence belongs to the endonuclease V family. The cofactor is Mg(2+).

The protein resides in the cytoplasm. It catalyses the reaction Endonucleolytic cleavage at apurinic or apyrimidinic sites to products with a 5'-phosphate.. DNA repair enzyme involved in the repair of deaminated bases. Selectively cleaves double-stranded DNA at the second phosphodiester bond 3' to a deoxyinosine leaving behind the intact lesion on the nicked DNA. Recognizes only deoxyinosine. This Archaeoglobus fulgidus (strain ATCC 49558 / DSM 4304 / JCM 9628 / NBRC 100126 / VC-16) protein is Endonuclease V.